Here is a 99-residue protein sequence, read N- to C-terminus: Large ribosomal subunit protein bL27 (99 aa).

Residues 1–12 constitute a propeptide that is removed on maturation; sequence MMINNLEALKLF. Positions 15–36 are disordered; sequence HKGGGSTANGRNSAGRRLGAKR.

Belongs to the bacterial ribosomal protein bL27 family. In terms of processing, the N-terminus is cleaved by ribosomal processing cysteine protease Prp.

The chain is Large ribosomal subunit protein bL27 from Lactobacillus johnsonii (strain CNCM I-12250 / La1 / NCC 533).